A 458-amino-acid chain; its full sequence is Repulsive guidance molecule A (458 aa).

Positions 1 to 53 are cleaved as a signal peptide; sequence MGGPGPRRAGTSRERLVVTGRAGWMGMGRGAGRSALGFWPTLAFLLCSFPAAT. Positions 54 to 176 are cleaved as a propeptide — removed in mature form; the sequence is SPCKILKCNS…NYTHCGLFGD (123 aa). Polar residues predominate over residues 121-133; the sequence is HNCSKDGPTSQPR. Residues 121–149 form a disordered region; that stretch reads HNCSKDGPTSQPRLHTLPPAGDSQERSDS. N-linked (GlcNAc...) asparagine glycosylation is found at Asn122 and Asn167. Disulfide bonds link Cys153–Cys234 and Cys171–Cys323. Asn397 is a glycosylation site (N-linked (GlcNAc...) asparagine). Ala433 is lipidated: GPI-anchor amidated alanine. A propeptide spans 434-458 (removed in mature form); the sequence is AGLPLAPQPLLGALILLLALFPVFC.

The protein belongs to the repulsive guidance molecule (RGM) family. In terms of assembly, interacts with NEO1, BMP2 and BMP4. In terms of processing, autocatalytically cleaved at low pH; the two chains remain linked via two disulfide bonds.

The protein localises to the cell membrane. Its function is as follows. Member of the repulsive guidance molecule (RGM) family that performs several functions in the developing and adult nervous system. Regulates cephalic neural tube closure, inhibits neurite outgrowth and cortical neuron branching, and the formation of mature synapses. Binding to its receptor NEO1/neogenin induces activation of RHOA-ROCK1/Rho-kinase signaling pathway through UNC5B-ARHGEF12/LARG-PTK2/FAK1 cascade, leading to collapse of the neuronal growth cone and neurite outgrowth inhibition. Furthermore, RGMA binding to NEO1/neogenin leads to HRAS inactivation by influencing HRAS-PTK2/FAK1-AKT1 pathway. It also functions as a bone morphogenetic protein (BMP) coreceptor that may signal through SMAD1, SMAD5, and SMAD8. In Macaca fascicularis (Crab-eating macaque), this protein is Repulsive guidance molecule A (RGMA).